Consider the following 90-residue polypeptide: Small ribosomal subunit protein bS20 (90 aa).

The protein belongs to the bacterial ribosomal protein bS20 family.

Binds directly to 16S ribosomal RNA. In Mesomycoplasma hyopneumoniae (strain J / ATCC 25934 / NCTC 10110) (Mycoplasma hyopneumoniae), this protein is Small ribosomal subunit protein bS20.